Reading from the N-terminus, the 128-residue chain is Azurin (128 aa).

The region spanning 1-128 (ACDVSIEGND…IMKGTIELGS (128 aa)) is the Plastocyanin-like domain. The cysteines at positions 2 and 25 are disulfide-linked. 4 residues coordinate Cu cation: His-45, Cys-111, His-116, and Met-120.

In terms of assembly, monomer. Interacts with the AAUA/AAUB heterotetramer complex. The cofactor is Cu cation.

It localises to the periplasm. Functionally, transfers electrons from cytochrome c551 to cytochrome oxidase. Transfers electrons from the tryptophan tryptophylquinone of the aromatic amine dehydrogenase heterotetramer. The chain is Azurin from Alcaligenes faecalis.